An 82-amino-acid chain; its full sequence is RNA-binding protein Hfq (82 aa).

Positions 11–72 (DTFLNAVRKS…ISTIAPSAPV (62 aa)) constitute a Sm domain.

Belongs to the Hfq family. Homohexamer.

In terms of biological role, RNA chaperone that binds small regulatory RNA (sRNAs) and mRNAs to facilitate mRNA translational regulation in response to envelope stress, environmental stress and changes in metabolite concentrations. Also binds with high specificity to tRNAs. In Hyphomonas neptunium (strain ATCC 15444), this protein is RNA-binding protein Hfq.